The primary structure comprises 176 residues: 3-hydroxydecanoyl-[acyl-carrier-protein] dehydratase (176 aa).

His75 is a catalytic residue.

The protein belongs to the thioester dehydratase family. FabA subfamily. In terms of assembly, homodimer.

The protein localises to the cytoplasm. The catalysed reaction is a (3R)-hydroxyacyl-[ACP] = a (2E)-enoyl-[ACP] + H2O. The enzyme catalyses (3R)-hydroxydecanoyl-[ACP] = (2E)-decenoyl-[ACP] + H2O. It carries out the reaction (2E)-decenoyl-[ACP] = (3Z)-decenoyl-[ACP]. It functions in the pathway lipid metabolism; fatty acid biosynthesis. Necessary for the introduction of cis unsaturation into fatty acids. Catalyzes the dehydration of (3R)-3-hydroxydecanoyl-ACP to E-(2)-decenoyl-ACP and then its isomerization to Z-(3)-decenoyl-ACP. Can catalyze the dehydratase reaction for beta-hydroxyacyl-ACPs with saturated chain lengths up to 16:0, being most active on intermediate chain length. The sequence is that of 3-hydroxydecanoyl-[acyl-carrier-protein] dehydratase from Actinobacillus pleuropneumoniae serotype 5b (strain L20).